The chain runs to 95 residues: YcgL domain-containing protein Patl_2802 (95 aa).

In terms of domain architecture, YcgL spans 4–88; it reads LLCAVYKSSK…PEENLLKQHL (85 aa).

This chain is YcgL domain-containing protein Patl_2802, found in Pseudoalteromonas atlantica (strain T6c / ATCC BAA-1087).